We begin with the raw amino-acid sequence, 476 residues long: Aspartyl/glutamyl-tRNA(Asn/Gln) amidotransferase subunit B (476 aa).

This sequence belongs to the GatB/GatE family. GatB subfamily. As to quaternary structure, heterotrimer of A, B and C subunits.

It carries out the reaction L-glutamyl-tRNA(Gln) + L-glutamine + ATP + H2O = L-glutaminyl-tRNA(Gln) + L-glutamate + ADP + phosphate + H(+). The enzyme catalyses L-aspartyl-tRNA(Asn) + L-glutamine + ATP + H2O = L-asparaginyl-tRNA(Asn) + L-glutamate + ADP + phosphate + 2 H(+). Its function is as follows. Allows the formation of correctly charged Asn-tRNA(Asn) or Gln-tRNA(Gln) through the transamidation of misacylated Asp-tRNA(Asn) or Glu-tRNA(Gln) in organisms which lack either or both of asparaginyl-tRNA or glutaminyl-tRNA synthetases. The reaction takes place in the presence of glutamine and ATP through an activated phospho-Asp-tRNA(Asn) or phospho-Glu-tRNA(Gln). This chain is Aspartyl/glutamyl-tRNA(Asn/Gln) amidotransferase subunit B, found in Solidesulfovibrio magneticus (strain ATCC 700980 / DSM 13731 / RS-1) (Desulfovibrio magneticus).